A 253-amino-acid chain; its full sequence is tRNA pseudouridine synthase A (253 aa).

The active-site Nucleophile is D51. Y110 lines the substrate pocket.

The protein belongs to the tRNA pseudouridine synthase TruA family. As to quaternary structure, homodimer.

The catalysed reaction is uridine(38/39/40) in tRNA = pseudouridine(38/39/40) in tRNA. Its function is as follows. Formation of pseudouridine at positions 38, 39 and 40 in the anticodon stem and loop of transfer RNAs. This Wolinella succinogenes (strain ATCC 29543 / DSM 1740 / CCUG 13145 / JCM 31913 / LMG 7466 / NCTC 11488 / FDC 602W) (Vibrio succinogenes) protein is tRNA pseudouridine synthase A.